The sequence spans 126 residues: MDNTLKFADSHEWVKDNGDGTVTIGISEHAQELLGDVVFVDLPDTEDEIEAGESFSLVESVKAASDIYAPISGEIVEINEELEDSPELINEEPYEGGWIVKVKMSDASELNNLKDAEEYLSSVEED.

In terms of domain architecture, Lipoyl-binding spans 21-103; it reads TVTIGISEHA…YEGGWIVKVK (83 aa). K62 bears the N6-lipoyllysine mark.

The protein belongs to the GcvH family. The glycine cleavage system is composed of four proteins: P, T, L and H. Requires (R)-lipoate as cofactor.

Functionally, the glycine cleavage system catalyzes the degradation of glycine. The H protein shuttles the methylamine group of glycine from the P protein to the T protein. The sequence is that of Glycine cleavage system H protein from Vibrio atlanticus (strain LGP32) (Vibrio splendidus (strain Mel32)).